The following is a 121-amino-acid chain: Small ribosomal subunit protein eS24 (121 aa).

Belongs to the eukaryotic ribosomal protein eS24 family.

This is Small ribosomal subunit protein eS24 from Pyrobaculum aerophilum (strain ATCC 51768 / DSM 7523 / JCM 9630 / CIP 104966 / NBRC 100827 / IM2).